The sequence spans 653 residues: Sodium-dependent phosphate transporter 2 (653 aa).

Residues 1–5 lie on the Extracellular side of the membrane; sequence MVLDE. The helical transmembrane segment at 6–26 threads the bilayer; it reads YMWMVIVGFIIAFVLAFSVGA. The Cytoplasmic portion of the chain corresponds to 27 to 46; it reads NDVANSFGTAVGSGVVTLRQ. Residues 47–67 form a helical membrane-spanning segment; sequence ACILASIFETIGSVLLGAKVG. Residues 68–86 are Extracellular-facing; the sequence is ETIRKGIIDVNLYNNTVDL. The N-linked (GlcNAc...) asparagine glycan is linked to N81. The helical transmembrane segment at 87 to 107 threads the bilayer; that stretch reads LMAGEVSAMVGSAVWQLIASF. Residues 108 to 109 are Cytoplasmic-facing; the sequence is LK. A helical transmembrane segment spans residues 110 to 130; sequence LPVSGTHCIVGATIGFSLVAV. The Extracellular segment spans residues 131–142; the sequence is GAHSVQWMQLVK. A helical transmembrane segment spans residues 143-163; it reads IVASWFISPLLSGLMSGALFL. Topologically, residues 164 to 187 are cytoplasmic; that stretch reads MIKFFILNKEDPVPNGLKALPVFY. The helical transmembrane segment at 188–208 threads the bilayer; it reads AATIGINVFSILFTGAPLLGL. Residues 209-217 are Extracellular-facing; it reads QTFPVWATA. A helical transmembrane segment spans residues 218–238; that stretch reads LLSVGIAIVFALVVWFFVCPW. The Cytoplasmic segment spans residues 239-483; the sequence is MKKKIASRLK…EDKEEKDKSQ (245 aa). The disordered stretch occupies residues 275–310; sequence LPGAKGNDESVLPLTSSSPDAAVSSESVSNGNTRVP. Over residues 290 to 303 the composition is skewed to low complexity; sequence SSSPDAAVSSESVS. Residues 484-504 form a helical membrane-spanning segment; that stretch reads VHLLFHFLQILTACFGSFAHG. At 505-532 the chain is on the extracellular side; it reads GNDVSNAIGPLVALWLIYQQGGVMQEAS. Residues 533–553 traverse the membrane as a helical segment; sequence TPVWLLLYGGVGICAGLWVWG. Residues 554 to 572 are Cytoplasmic-facing; sequence RRVIQTMGKDLTPITPSSG. Residues 573 to 587 form a helical membrane-spanning segment; that stretch reads FTIELASAFTVVVAS. At 588–594 the chain is on the extracellular side; it reads NIGLPIS. Residues 595-610 form a helical membrane-spanning segment; it reads TTHCKVGSVVAVGWIR. The Cytoplasmic portion of the chain corresponds to 611-622; it reads SRKAVDWRLFRN. A helical membrane pass occupies residues 623 to 643; it reads IFLAWFVTVPVAGLFSAGVMA. Topologically, residues 644–653 are extracellular; the sequence is ILQYGILPYV.

This sequence belongs to the inorganic phosphate transporter (PiT) (TC 2.A.20) family. Homodimer.

Its subcellular location is the cell membrane. It is found in the apical cell membrane. It catalyses the reaction 2 Na(+)(out) + phosphate(out) = 2 Na(+)(in) + phosphate(in). Its function is as follows. Sodium-phosphate symporter which preferentially transports the monovalent form of phosphate with a stoichiometry of two sodium ions per phosphate ion. In Xenopus laevis (African clawed frog), this protein is Sodium-dependent phosphate transporter 2 (slc20a2).